Consider the following 89-residue polypeptide: SAP domain-containing new25 (89 aa).

One can recognise an SAP domain in the interval 44 to 78 (PSQWSKKQLIEYCKKNSLKTSGSHEELVIRVQNHL).

In Schizosaccharomyces pombe (strain 972 / ATCC 24843) (Fission yeast), this protein is SAP domain-containing new25 (new25).